The following is a 672-amino-acid chain: DNA ligase (672 aa).

NAD(+) contacts are provided by residues 34-38 (DAEYD), 83-84 (SL), and Glu-117. Lys-119 functions as the N6-AMP-lysine intermediate in the catalytic mechanism. Positions 140, 177, 293, and 317 each coordinate NAD(+). Positions 411, 414, 429, and 434 each coordinate Zn(2+). In terms of domain architecture, BRCT spans 591–672 (RVGGRFTGKT…FLAMLGVCRT (82 aa)).

This sequence belongs to the NAD-dependent DNA ligase family. LigA subfamily. Mg(2+) serves as cofactor. It depends on Mn(2+) as a cofactor.

The enzyme catalyses NAD(+) + (deoxyribonucleotide)n-3'-hydroxyl + 5'-phospho-(deoxyribonucleotide)m = (deoxyribonucleotide)n+m + AMP + beta-nicotinamide D-nucleotide.. In terms of biological role, DNA ligase that catalyzes the formation of phosphodiester linkages between 5'-phosphoryl and 3'-hydroxyl groups in double-stranded DNA using NAD as a coenzyme and as the energy source for the reaction. It is essential for DNA replication and repair of damaged DNA. In Geotalea uraniireducens (strain Rf4) (Geobacter uraniireducens), this protein is DNA ligase.